The primary structure comprises 225 residues: Thymidylate kinase (225 aa).

Residue 10-17 (GGEGAGKT) coordinates ATP.

Belongs to the thymidylate kinase family.

It carries out the reaction dTMP + ATP = dTDP + ADP. Phosphorylation of dTMP to form dTDP in both de novo and salvage pathways of dTTP synthesis. The protein is Thymidylate kinase of Oceanobacillus iheyensis (strain DSM 14371 / CIP 107618 / JCM 11309 / KCTC 3954 / HTE831).